The following is a 243-amino-acid chain: tRNA (guanine-N(1)-)-methyltransferase (243 aa).

S-adenosyl-L-methionine is bound by residues Gly-111 and 130–135 (IGDYVL).

The protein belongs to the RNA methyltransferase TrmD family. Homodimer.

The protein resides in the cytoplasm. The enzyme catalyses guanosine(37) in tRNA + S-adenosyl-L-methionine = N(1)-methylguanosine(37) in tRNA + S-adenosyl-L-homocysteine + H(+). Specifically methylates guanosine-37 in various tRNAs. In Acholeplasma laidlawii (strain PG-8A), this protein is tRNA (guanine-N(1)-)-methyltransferase.